The following is a 409-amino-acid chain: Sulfide-quinone reductase (409 aa).

Residues 8-12 (GGRFG), 34-35 (NK), and Cys-129 contribute to the FAD site. Cys-178 serves as the catalytic Cysteine persulfide intermediate. The FAD site is built by Asn-271, Asp-307, and Gly-317. The active-site Cysteine persulfide intermediate is Cys-350.

Belongs to the SQRD family. Monomer. FAD serves as cofactor.

Its subcellular location is the membrane. It catalyses the reaction n a quinone + n hydrogen sulfide + n H(+) = polysulfur(n-2) + n a quinol. Inhibited by the quinone analog 2-heptyl-4-hydroxyquinolone N-oxide (HQNO). Inactivated by iodoacetamide treatment. Inhibited by KCN. In terms of biological role, catalyzes the oxidation of sulfides, such as hydrogen sulfide, with the help of a quinone. Has the highest activity with caldariella quinone and decylubiquinone, and lower activity with naphtoquinones. Consecutive reaction cycles lead to the accumulation of a polysulfide product on the active site Cys residues; these products are released when they exceed a critical length, typically as cyclooctasulfur. The protein is Sulfide-quinone reductase of Acidianus ambivalens (Desulfurolobus ambivalens).